We begin with the raw amino-acid sequence, 114 residues long: MNGGLCLCVLMAVLAAGTLAQPVPPADSAVPGAQEEEAHRRQLRAVQKVDGESRAHLGALLARYIQQARKAPSGRVSMIKNLQSLDPSHRISDRDYMGWMDFGRRSAEEYEYTS.

The N-terminal stretch at 1–20 (MNGGLCLCVLMAVLAAGTLA) is a signal peptide. Tyr-96 is modified (sulfotyrosine). Phe-102 is subject to Phenylalanine amide. The propeptide occupies 106–114 (SAEEYEYTS). 2 positions are modified to sulfotyrosine: Tyr-110 and Tyr-112.

It belongs to the gastrin/cholecystokinin family. As to quaternary structure, binds to CCK-A receptors in the pancreas and CCK-B receptors in the brain. The precursor is cleaved by proteases to produce a number of active cholecystokinins. Brain contains CCK-octapeptide (CCK8) and several CCK-desoctapeptides; whereas pig gut contains intact CCK33, CCK39, and CCK58 as well as CCK-octapeptide and the CCK-desoctapeptides. Distribution differences are due to tissue-specific post-translational processing events. In terms of processing, the precursor is cleaved by ACE, which removes the Gly-Arg-Arg peptide at the C-terminus, leading to mature hormone. In terms of tissue distribution, synthesized in both cerebral cortex and duodenal mucosa.

The protein resides in the secreted. In terms of biological role, this peptide hormone induces gall bladder contraction and the release of pancreatic enzymes in the gut. Its function in the brain is not clear. Binding to CCK-A receptors stimulates amylase release from the pancreas, binding to CCK-B receptors stimulates gastric acid secretion. This is Cholecystokinin (CCK) from Sus scrofa (Pig).